The sequence spans 224 residues: ATP-dependent dethiobiotin synthetase BioD (224 aa).

12–17 (GVGKTF) serves as a coordination point for ATP. Mg(2+) is bound at residue threonine 16. Residue lysine 37 is part of the active site. Threonine 41 contacts substrate. Residues asparagine 52, 107–110 (EGAG), 167–168 (GS), 197–199 (PEG), and glutamate 204 each bind ATP. Mg(2+)-binding residues include asparagine 52 and glutamate 107.

This sequence belongs to the dethiobiotin synthetase family. As to quaternary structure, homodimer. Mg(2+) serves as cofactor.

It is found in the cytoplasm. It catalyses the reaction (7R,8S)-7,8-diammoniononanoate + CO2 + ATP = (4R,5S)-dethiobiotin + ADP + phosphate + 3 H(+). It functions in the pathway cofactor biosynthesis; biotin biosynthesis; biotin from 7,8-diaminononanoate: step 1/2. Functionally, catalyzes a mechanistically unusual reaction, the ATP-dependent insertion of CO2 between the N7 and N8 nitrogen atoms of 7,8-diaminopelargonic acid (DAPA, also called 7,8-diammoniononanoate) to form a ureido ring. This Corynebacterium glutamicum (strain ATCC 13032 / DSM 20300 / JCM 1318 / BCRC 11384 / CCUG 27702 / LMG 3730 / NBRC 12168 / NCIMB 10025 / NRRL B-2784 / 534) protein is ATP-dependent dethiobiotin synthetase BioD.